The sequence spans 245 residues: Endogenous retrovirus group K member 5 Env polyprotein (245 aa).

Residues 1-245 (MVTPVTWMDN…TLEFGLEIKL (245 aa)) are truncated surface protein.

This sequence belongs to the beta type-B retroviral envelope protein family. HERV class-II K(HML-2) env subfamily. In terms of tissue distribution, expressed in lung, placenta, testis, peripheral blood lymphocytes, and teratocarcinoma cell lines.

The protein localises to the virion. In terms of biological role, retroviral envelope proteins mediate receptor recognition and membrane fusion during early infection. Endogenous envelope proteins may have kept, lost or modified their original function during evolution. The polypeptide is Endogenous retrovirus group K member 5 Env polyprotein (ERVK-5) (Homo sapiens (Human)).